The primary structure comprises 425 residues: Queuine tRNA-ribosyltransferase accessory subunit 2 (425 aa).

A disordered region spans residues 302–323 (QNGAQDLEKNSPEEDQEEEVVK). The Zn(2+) site is built by cysteine 351, cysteine 353, cysteine 356, and histidine 382.

Belongs to the queuine tRNA-ribosyltransferase family. QTRT2 subfamily. As to quaternary structure, heterodimer of a catalytic subunit QTRT1 and an accessory subunit QTRT2. Requires Zn(2+) as cofactor.

It localises to the cytoplasm. Its subcellular location is the mitochondrion outer membrane. Functionally, non-catalytic subunit of the queuine tRNA-ribosyltransferase (TGT) that catalyzes the base-exchange of a guanine (G) residue with queuine (Q) at position 34 (anticodon wobble position) in tRNAs with GU(N) anticodons (tRNA-Asp, -Asn, -His and -Tyr), resulting in the hypermodified nucleoside queuosine (7-(((4,5-cis-dihydroxy-2-cyclopenten-1-yl)amino)methyl)-7-deazaguanosine). This chain is Queuine tRNA-ribosyltransferase accessory subunit 2, found in Gallus gallus (Chicken).